The primary structure comprises 162 residues: Glutathione peroxidase-like peroxiredoxin 2 (162 aa).

Cys37 functions as the Cysteine sulfenic acid (-SOH) intermediate in the catalytic mechanism. Cys37 and Cys83 are oxidised to a cystine.

This sequence belongs to the glutathione peroxidase family. In terms of assembly, monomer.

The protein resides in the cytoplasm. It localises to the nucleus. The protein localises to the mitochondrion outer membrane. It is found in the mitochondrion inner membrane. The catalysed reaction is a hydroperoxide + [thioredoxin]-dithiol = an alcohol + [thioredoxin]-disulfide + H2O. Functionally, glutathione peroxidase-like protein that protects cells from phospholipid hydroperoxides and nonphospholipid peroxides during oxidative stress. Plays an important role in the oxidative stress-induced response in the presence of Ca(2+). Has peroxidase activity using preferentially thioredoxin as a reducing power. The redox state of the mitochondrial GPX2 is regulated by TRX1 and TRX2 (cytoplasmic thioredoxin), and by TRX3 (mitochondrial matrix thioredoxin). Involved in sporulation. This is Glutathione peroxidase-like peroxiredoxin 2 from Saccharomyces cerevisiae (strain ATCC 204508 / S288c) (Baker's yeast).